A 1369-amino-acid polypeptide reads, in one-letter code: Phosphoribosylformylglycinamidine synthase (1369 aa).

Disordered stretches follow at residues 321-352 (HPTA…AKPK) and 373-400 (ENAR…KPDR). 330–341 (GASTGAGGEIRD) contributes to the ATP binding site. Ala721 contacts ATP. Positions 722, 761, 765, and 934 each coordinate Mg(2+). Ser936 is a binding site for ATP. The region spanning 1116–1369 (MAILREQGVN…MFRNARKQMG (254 aa)) is the Glutamine amidotransferase type-1 domain. Catalysis depends on Cys1209, which acts as the Nucleophile. Active-site residues include His1330 and Glu1332.

This sequence in the N-terminal section; belongs to the FGAMS family. Monomer.

Its subcellular location is the cytoplasm. It catalyses the reaction N(2)-formyl-N(1)-(5-phospho-beta-D-ribosyl)glycinamide + L-glutamine + ATP + H2O = 2-formamido-N(1)-(5-O-phospho-beta-D-ribosyl)acetamidine + L-glutamate + ADP + phosphate + H(+). It functions in the pathway purine metabolism; IMP biosynthesis via de novo pathway; 5-amino-1-(5-phospho-D-ribosyl)imidazole from N(2)-formyl-N(1)-(5-phospho-D-ribosyl)glycinamide: step 1/2. Its function is as follows. Phosphoribosylformylglycinamidine synthase involved in the purines biosynthetic pathway. Catalyzes the ATP-dependent conversion of formylglycinamide ribonucleotide (FGAR) and glutamine to yield formylglycinamidine ribonucleotide (FGAM) and glutamate. This chain is Phosphoribosylformylglycinamidine synthase, found in Ralstonia nicotianae (strain ATCC BAA-1114 / GMI1000) (Ralstonia solanacearum).